Reading from the N-terminus, the 232-residue chain is Large ribosomal subunit protein uL1 (232 aa).

Belongs to the universal ribosomal protein uL1 family. Part of the 50S ribosomal subunit.

Its function is as follows. Binds directly to 23S rRNA. The L1 stalk is quite mobile in the ribosome, and is involved in E site tRNA release. Protein L1 is also a translational repressor protein, it controls the translation of the L11 operon by binding to its mRNA. The protein is Large ribosomal subunit protein uL1 of Dinoroseobacter shibae (strain DSM 16493 / NCIMB 14021 / DFL 12).